The following is a 435-amino-acid chain: GTPase Der (435 aa).

2 EngA-type G domains span residues 3–168 and 176–351; these read PLVA…PDET and IKLA…QNRQ. GTP-binding positions include 9–16, 56–60, 120–123, 182–189, 229–233, and 294–297; these read GRPNVGKS, DTGGY, NKVE, DTAGL, and NKWD. One can recognise a KH-like domain in the interval 352–435; it reads KKISTSELNR…VPVSFRYRKK (84 aa).

It belongs to the TRAFAC class TrmE-Era-EngA-EngB-Septin-like GTPase superfamily. EngA (Der) GTPase family. In terms of assembly, associates with the 50S ribosomal subunit.

Functionally, GTPase that plays an essential role in the late steps of ribosome biogenesis. The polypeptide is GTPase Der (Chlorobium phaeobacteroides (strain BS1)).